The chain runs to 173 residues: Superoxide dismutase [Cu-Zn] (173 aa).

The first 22 residues, 1-22 (MNKAKTLLFTALAFGLSHQALA), serve as a signal peptide directing secretion. Cu cation contacts are provided by H67, H69, and H92. An intrachain disulfide couples C74 to C169. Zn(2+)-binding residues include H92, H101, H110, and D113. Residue H147 participates in Cu cation binding.

Belongs to the Cu-Zn superoxide dismutase family. In terms of assembly, homodimer. Cu cation is required as a cofactor. Zn(2+) serves as cofactor.

The protein resides in the periplasm. The catalysed reaction is 2 superoxide + 2 H(+) = H2O2 + O2. Destroys radicals which are normally produced within the cells and which are toxic to biological systems. The sequence is that of Superoxide dismutase [Cu-Zn] (sodC) from Photobacterium leiognathi.